Consider the following 429-residue polypeptide: Histidine--tRNA ligase (429 aa).

Belongs to the class-II aminoacyl-tRNA synthetase family. As to quaternary structure, homodimer.

It localises to the cytoplasm. The catalysed reaction is tRNA(His) + L-histidine + ATP = L-histidyl-tRNA(His) + AMP + diphosphate + H(+). The sequence is that of Histidine--tRNA ligase from Pseudomonas aeruginosa (strain LESB58).